The following is a 320-amino-acid chain: L-lactate dehydrogenase 2 (320 aa).

4 residues coordinate NAD(+): Val16, Asp37, Lys42, and Tyr69. Arg94 contributes to the substrate binding site. Residues Ser107, 124–126 (VTN), and Thr149 contribute to the NAD(+) site. 126-129 (NPVD) provides a ligand contact to substrate. 154–157 (DTAR) is a substrate binding site. 2 residues coordinate beta-D-fructose 1,6-bisphosphate: Arg159 and His174. The active-site Proton acceptor is His181. Thr235 contacts substrate.

Belongs to the LDH/MDH superfamily. LDH family. Homotetramer.

It localises to the cytoplasm. It carries out the reaction (S)-lactate + NAD(+) = pyruvate + NADH + H(+). It functions in the pathway fermentation; pyruvate fermentation to lactate; (S)-lactate from pyruvate: step 1/1. Its activity is regulated as follows. Allosterically activated by fructose 1,6-bisphosphate (FBP). In terms of biological role, catalyzes the conversion of lactate to pyruvate. This Clostridium acetobutylicum (strain ATCC 824 / DSM 792 / JCM 1419 / IAM 19013 / LMG 5710 / NBRC 13948 / NRRL B-527 / VKM B-1787 / 2291 / W) protein is L-lactate dehydrogenase 2.